A 406-amino-acid chain; its full sequence is L-cysteine:1D-myo-inositol 2-amino-2-deoxy-alpha-D-glucopyranoside ligase (406 aa).

Cysteine 45 provides a ligand contact to Zn(2+). Residues 45–48 (CGIT), threonine 60, and 83–85 (NIT) contribute to the L-cysteinyl-5'-AMP site. The 'HIGH' region motif lies at 47-57 (ITPYDATHMGH). The 'ERGGDP' region motif lies at 185-190 (ERGGDP). Residue tryptophan 225 coordinates L-cysteinyl-5'-AMP. Residue cysteine 229 coordinates Zn(2+). Residue 247 to 249 (GSD) coordinates L-cysteinyl-5'-AMP. Histidine 254 serves as a coordination point for Zn(2+). Valine 281 contacts L-cysteinyl-5'-AMP. Positions 287–291 (KMSKS) match the 'KMSKS' region motif.

This sequence belongs to the class-I aminoacyl-tRNA synthetase family. MshC subfamily. In terms of assembly, monomer. Zn(2+) serves as cofactor.

The catalysed reaction is 1D-myo-inositol 2-amino-2-deoxy-alpha-D-glucopyranoside + L-cysteine + ATP = 1D-myo-inositol 2-(L-cysteinylamino)-2-deoxy-alpha-D-glucopyranoside + AMP + diphosphate + H(+). Catalyzes the ATP-dependent condensation of GlcN-Ins and L-cysteine to form L-Cys-GlcN-Ins. The sequence is that of L-cysteine:1D-myo-inositol 2-amino-2-deoxy-alpha-D-glucopyranoside ligase from Kribbella flavida (strain DSM 17836 / JCM 10339 / NBRC 14399).